The sequence spans 512 residues: Cytokinin hydroxylase (512 aa).

The chain crosses the membrane as a helical span at residues 2–22 (MVTLVLKYVLVIVMTLILRVL). Cysteine 458 is a binding site for heme.

It belongs to the cytochrome P450 family. The cofactor is heme. Specifically expressed in roots.

The protein resides in the membrane. The enzyme catalyses N(6)-(dimethylallyl)adenosine 5'-phosphate + NADPH + O2 + H(+) = 9-ribosyl-trans-zeatin 5'-phosphate + NADP(+) + H2O. It catalyses the reaction N(6)-(dimethylallyl)adenosine 5'-diphosphate + NADPH + O2 + H(+) = 9-ribosyl-trans-zeatin 5'-diphosphate + NADP(+) + H2O. The catalysed reaction is N(6)-(dimethylallyl)adenosine 5'-triphosphate + NADPH + O2 + H(+) = 9-ribosyl-trans-zeatin 5'-triphosphate + NADP(+) + H2O. Its function is as follows. Cytokinin hydroxylase that catalyzes the biosynthesis of trans-zeatin via the isopentenyladenine riboside 5'-monophosphate (iPRMP)-dependent pathway. Can use isopentenyladenosine-5'-monophosphate, isopentenyladenosine-5'-diphosphate and isopentenyladenosine-5'-triphosphate as substrate. The polypeptide is Cytokinin hydroxylase (CYP735A2) (Arabidopsis thaliana (Mouse-ear cress)).